The primary structure comprises 259 residues: Global transcriptional regulator CodY (259 aa).

Residues 1–155 (MTLLEKTRKI…GGTVVGMEIL (155 aa)) are GAF domain. Residues 203–222 (ASKIADRVGITRSVIVNALR) constitute a DNA-binding region (H-T-H motif).

Belongs to the CodY family.

It localises to the cytoplasm. DNA-binding global transcriptional regulator which is involved in the adaptive response to starvation and acts by directly or indirectly controlling the expression of numerous genes in response to nutrient availability. During rapid exponential growth, CodY is highly active and represses genes whose products allow adaptation to nutrient depletion. The polypeptide is Global transcriptional regulator CodY (Listeria monocytogenes serotype 4b (strain CLIP80459)).